The primary structure comprises 263 residues: GTP cyclohydrolase FolE2 (263 aa).

The protein belongs to the GTP cyclohydrolase IV family.

It carries out the reaction GTP + H2O = 7,8-dihydroneopterin 3'-triphosphate + formate + H(+). Its pathway is cofactor biosynthesis; 7,8-dihydroneopterin triphosphate biosynthesis; 7,8-dihydroneopterin triphosphate from GTP: step 1/1. Functionally, converts GTP to 7,8-dihydroneopterin triphosphate. The chain is GTP cyclohydrolase FolE2 from Nitrosospira multiformis (strain ATCC 25196 / NCIMB 11849 / C 71).